We begin with the raw amino-acid sequence, 429 residues long: Enolase (429 aa).

Glutamine 164 is a (2R)-2-phosphoglycerate binding site. Residue glutamate 206 is the Proton donor of the active site. Mg(2+) is bound by residues aspartate 243, glutamate 286, and aspartate 313. The (2R)-2-phosphoglycerate site is built by lysine 338, arginine 367, serine 368, and lysine 389. Catalysis depends on lysine 338, which acts as the Proton acceptor.

This sequence belongs to the enolase family. Requires Mg(2+) as cofactor.

The protein resides in the cytoplasm. It localises to the secreted. Its subcellular location is the cell surface. It carries out the reaction (2R)-2-phosphoglycerate = phosphoenolpyruvate + H2O. Its pathway is carbohydrate degradation; glycolysis; pyruvate from D-glyceraldehyde 3-phosphate: step 4/5. Its function is as follows. Catalyzes the reversible conversion of 2-phosphoglycerate (2-PG) into phosphoenolpyruvate (PEP). It is essential for the degradation of carbohydrates via glycolysis. The sequence is that of Enolase from Thermotoga sp. (strain RQ2).